Reading from the N-terminus, the 711-residue chain is Taperin (711 aa).

Disordered stretches follow at residues 134-305, 328-384, and 414-438; these read SRLL…APKP, RNSF…LGKS, and QRPSSPPPFLPAASEEAEPAEGLRV. The segment covering 157 to 180 has biased composition (pro residues); sequence PPPPPPPPAPPRPPPAAPSPPAAP. The span at 197–206 shows a compositional bias: polar residues; that stretch reads LQKTGSNSFT. Phosphoserine is present on Ser241. Over residues 267–282 the composition is skewed to low complexity; sequence TPSATPASPPASATPS. A compositionally biased stretch (polar residues) spans 283–296; the sequence is QRQCVSAATSTNDS. 3 positions are modified to phosphoserine: Ser362, Ser418, and Ser463. Disordered regions lie at residues 500–535, 572–630, 642–662, and 674–711; these read TFTVVPKRKPGTLQDQHFSQANREPRPREAEEEEAS, SRKK…EKPF, SVRPESSRLPEGSSGLSSYTP, and QALEQAPREAEPPPVEAMLTPASQNDLSDFRSEPALYF. Polar residues-rich tracts occupy residues 512-521 and 581-590; these read LQDQHFSQAN and NDKSLQTTFE. The segment covering 597-624 has biased composition (acidic residues); it reads LEQEEEVDQQEEEEEEEEEEEEEEEGSG.

Belongs to the taperin family. As to quaternary structure, interacts with GRXCR2; the interaction restricts TPRN to the stereocilum basal region. Interacts with actin ACTB; the interaction may stabilize stereocilia. Interacts with CLIC5. Interacts with PTPRQ. TPRN, CLIC5 and PTPQR form concentric rings at the base of stereocilia and may form a complex. Interacts with phosphatase PPP1CA; the interaction results in inhibition of PPC1A phosphatase activity. Interacts with DNA damage response proteins XRCC6/KU70, XRCC5/KU80, PARP1, TOP1 and TOP2A; these interactions recruit TPRN to sites of DNA damage where it may play a role in DNA repair. In terms of tissue distribution, expression is detected in fetal cochlea.

It localises to the cell projection. Its subcellular location is the stereocilium. The protein localises to the microvillus. It is found in the nucleus. The protein resides in the nucleoplasm. It localises to the cytoplasm. Essential for hearing. Required for maintenance of stereocilia on both inner and outer hair cells. Necessary for the integrity of the stereociliary rootlet. May act as an actin cytoskeleton regulator involved in the regulation of actin dynamics at the pointed end in hair cells. Forms rings at the base of stereocilia and binds actin filaments in the stereocilia which may stabilize the stereocilia. Acts as a strong inhibitor of PPP1CA phosphatase activity. Recruited to sites of DNA damage and may play a role in DNA damage repair. The protein is Taperin (TPRN) of Homo sapiens (Human).